A 62-amino-acid polypeptide reads, in one-letter code: UPF0291 protein CLI_2672 (62 aa).

Belongs to the UPF0291 family.

The protein localises to the cytoplasm. The sequence is that of UPF0291 protein CLI_2672 from Clostridium botulinum (strain Langeland / NCTC 10281 / Type F).